The chain runs to 918 residues: Dual serine/threonine and tyrosine protein kinase (918 aa).

Basic and acidic residues predominate over residues 1-19 (MQKDGTRSSRRMEEGDRRN). Residues 1 to 29 (MQKDGTRSSRRMEEGDRRNGSTGSSGSVS) form a disordered region. A Protein kinase domain is found at 643–897 (PRIGRELGRG…PLMGIVQPML (255 aa)). Residues 649-657 (LGRGQYGVV) and Lys672 contribute to the ATP site. Catalysis depends on Asp768, which acts as the Proton acceptor.

This sequence belongs to the protein kinase superfamily. Ser/Thr protein kinase family.

Its subcellular location is the cytoplasm. It localises to the cell membrane. The protein localises to the apical cell membrane. The protein resides in the basolateral cell membrane. It is found in the cell junction. It catalyses the reaction L-seryl-[protein] + ATP = O-phospho-L-seryl-[protein] + ADP + H(+). It carries out the reaction L-threonyl-[protein] + ATP = O-phospho-L-threonyl-[protein] + ADP + H(+). The catalysed reaction is L-tyrosyl-[protein] + ATP = O-phospho-L-tyrosyl-[protein] + ADP + H(+). In terms of biological role, may act as a positive regulator of ERK phosphorylation downstream of fibroblast growth factor-receptor activation. May induce both caspase-dependent apoptosis and caspase-independent cell death. May play a role in the embryonic development. This chain is Dual serine/threonine and tyrosine protein kinase (dstyk), found in Xenopus tropicalis (Western clawed frog).